We begin with the raw amino-acid sequence, 116 residues long: Cell cycle protein GpsB (116 aa).

Residues 32–69 (LDDVIKDYETYSALVKELREENSRLKQELSKRMQEAPN) adopt a coiled-coil conformation. The tract at residues 57–78 (KQELSKRMQEAPNSTASQVHQS) is disordered. The span at 67-78 (APNSTASQVHQS) shows a compositional bias: polar residues.

Belongs to the GpsB family. In terms of assembly, forms polymers through the coiled coil domains. Interacts with PBP1, MreC and EzrA.

It is found in the cytoplasm. Its function is as follows. Divisome component that associates with the complex late in its assembly, after the Z-ring is formed, and is dependent on DivIC and PBP2B for its recruitment to the divisome. Together with EzrA, is a key component of the system that regulates PBP1 localization during cell cycle progression. Its main role could be the removal of PBP1 from the cell pole after pole maturation is completed. Also contributes to the recruitment of PBP1 to the division complex. Not essential for septum formation. The chain is Cell cycle protein GpsB from Streptococcus gordonii (strain Challis / ATCC 35105 / BCRC 15272 / CH1 / DL1 / V288).